A 77-amino-acid chain; its full sequence is Conotoxin Vc1 (77 aa).

An N-terminal signal peptide occupies residues 1 to 22; sequence MRTSGRLLLLCLAVGLLLESQA. 2 propeptides span residues 23-58 and 73-77; these read HPNA…KGQR and RRSFY.

The protein belongs to the conotoxin H superfamily. In terms of tissue distribution, expressed by the venom duct.

The protein localises to the secreted. Its function is as follows. Probable toxin. This chain is Conotoxin Vc1, found in Conus victoriae (Queen Victoria cone).